Consider the following 2004-residue polypeptide: Alpha-2-macroglobulin homolog (2004 aa).

The N-terminal stretch at 1–27 (MLCCLVFKGLLSMDLLRFLLISPFALI) is a signal peptide.

It belongs to the protease inhibitor I39 (alpha-2-macroglobulin) family. Bacterial alpha-2-macroglobulin subfamily.

This is Alpha-2-macroglobulin homolog from Yersinia pestis.